The sequence spans 298 residues: MSDEKIRQIAFYGKGGIGKSTTSQNTIAAMAEMGQRIMIVGCDPKADSTRLMLHSKAQTTILHLAAERGAVEDLELEEVLLTGFRDVRCVESGGPEPGVGCAGRGIITAINFLEENGAYEDLDFVSYDVLGDVVCGGFAMPIREGKAQEIYIVTSGEMMAMYAANNIARGVLKYAHSGGVRLGGLICNSRKVDRELELIETLAKRLNTQMLHFVPRDNIVQHAELRRMTVNEYAPDSNQANEYRVLAQKIIDNKNLAIPTPITMDELEDLLVEFGILGGEEEYQKAISQDQGKQLTTV.

Residue 13-20 (GKGGIGKS) participates in ATP binding. Residue cysteine 101 coordinates [4Fe-4S] cluster. Arginine 104 is modified (ADP-ribosylarginine; by dinitrogenase reductase ADP-ribosyltransferase). A [4Fe-4S] cluster-binding site is contributed by cysteine 135.

This sequence belongs to the NifH/BchL/ChlL family. In terms of assembly, homodimer. Requires [4Fe-4S] cluster as cofactor. The reversible ADP-ribosylation of Arg-104 inactivates the nitrogenase reductase and regulates nitrogenase activity.

The catalysed reaction is N2 + 8 reduced [2Fe-2S]-[ferredoxin] + 16 ATP + 16 H2O = H2 + 8 oxidized [2Fe-2S]-[ferredoxin] + 2 NH4(+) + 16 ADP + 16 phosphate + 6 H(+). In terms of biological role, the key enzymatic reactions in nitrogen fixation are catalyzed by the nitrogenase complex, which has 2 components: the iron protein and the molybdenum-iron protein. The polypeptide is Nitrogenase iron protein (Cyanothece sp. (strain PCC 7425 / ATCC 29141)).